The chain runs to 321 residues: Outer envelope protein 36, chloroplastic (321 aa).

This sequence belongs to the OEP80 (TC 1.B.33.2) family. Expressed in germinating seeds.

Its subcellular location is the plastid. The protein localises to the chloroplast outer membrane. In terms of biological role, may play a role during plastid development. In Arabidopsis thaliana (Mouse-ear cress), this protein is Outer envelope protein 36, chloroplastic.